A 287-amino-acid polypeptide reads, in one-letter code: Heavy metal-associated isoprenylated plant protein 4 (287 aa).

2 HMA domains span residues 14 to 80 (IITA…VELI) and 112 to 176 (IRTT…KHAE). The a metal cation site is built by cysteine 25, cysteine 28, cysteine 123, and cysteine 126. Residues 179-235 (SSKTEEEKKKEEEDKKKKEEEDKKKKEDEKKKEEEKKKEEENKKKEGEKKKEEVKVE) are a coiled coil. A disordered region spans residues 181–232 (KTEEEKKKEEEDKKKKEEEDKKKKEDEKKKEEEKKKEEENKKKEGEKKKEEV). At cysteine 284 the chain carries Cysteine methyl ester. Cysteine 284 is lipidated: S-farnesyl cysteine. Residues 285 to 287 (RIV) constitute a propeptide, removed in mature form.

Belongs to the HIPP family.

Its function is as follows. Heavy-metal-binding protein. This is Heavy metal-associated isoprenylated plant protein 4 from Arabidopsis thaliana (Mouse-ear cress).